A 120-amino-acid polypeptide reads, in one-letter code: MAWTPLLLLFPLLLHCTGSLSQPVLTQSSSASASLGSSVKLTCTLSSGHSSYIIAWHQQQPGKAPRYLMKLEGSGSYNKGSGVPDRFSGSSSGADRYLTISNLQFEDEADYYCETWDSNT.

An N-terminal signal peptide occupies residues 1–21 (MAWTPLLLLFPLLLHCTGSLS). The interval 22–46 (QPVLTQSSSASASLGSSVKLTCTLS) is framework-1. The 98-residue stretch at 23 to 120 (PVLTQSSSAS…YYCETWDSNT (98 aa)) folds into the Ig-like domain. A disulfide bond links Cys-43 and Cys-113. Positions 47–53 (SGHSSYI) are complementarity-determining-1. The framework-2 stretch occupies residues 54–70 (IAWHQQQPGKAPRYLMK). A complementarity-determining-2 region spans residues 71 to 77 (LEGSGSY). Residues 78–113 (NKGSGVPDRFSGSSSGADRYLTISNLQFEDEADYYC) are framework-3. The tract at residues 114–120 (ETWDSNT) is complementarity-determining-3.

As to quaternary structure, immunoglobulins are composed of two identical heavy chains and two identical light chains; disulfide-linked.

The protein resides in the secreted. The protein localises to the cell membrane. Its function is as follows. V region of the variable domain of immunoglobulin light chains that participates in the antigen recognition. Immunoglobulins, also known as antibodies, are membrane-bound or secreted glycoproteins produced by B lymphocytes. In the recognition phase of humoral immunity, the membrane-bound immunoglobulins serve as receptors which, upon binding of a specific antigen, trigger the clonal expansion and differentiation of B lymphocytes into immunoglobulins-secreting plasma cells. Secreted immunoglobulins mediate the effector phase of humoral immunity, which results in the elimination of bound antigens. The antigen binding site is formed by the variable domain of one heavy chain, together with that of its associated light chain. Thus, each immunoglobulin has two antigen binding sites with remarkable affinity for a particular antigen. The variable domains are assembled by a process called V-(D)-J rearrangement and can then be subjected to somatic hypermutations which, after exposure to antigen and selection, allow affinity maturation for a particular antigen. This Homo sapiens (Human) protein is Immunoglobulin lambda variable 4-60.